The following is a 432-amino-acid chain: MLNPNLLRNHIEFVFKNLARRGFSLDVKQFTEMEKKRKILQTKVEELQSRHNTLSKHIGRIKLIHPNIQCMKERIITLKKKIDVMKKELKILLEQIHIFLMNIPNLPDINIPDGMGSDDNQEVSRWGIIKNYNFKIKNHVELGNHLNGFDWKSAANISGSRFFIMKGKIALLYRVLGQFMLDLHTNEHGYLETYVPCLVKTNNLYGTGQLPRFKTDLFYAKSLLDESQNNNNFALIPTAEVPLTNLFRDCILDEQQLPIMLVAKTPCFRSEALSYGRDTQGLIRTHQFDKVEIVQIVHPSDSMQKLEELTIHAERVLKLLKLPYRKTLLCTRDIGFSSSKTYDLEVWFPSQNVYREVSSCSNMLDFQARRIKARFHCNAQNKKIFIHTINGSGLAVGRTLAAILENYQQKDGRIKIPKILRNNYMNGLEFLE.

238–240 contacts L-serine; that stretch reads TAE. 269–271 is an ATP binding site; sequence RSE. Glu292 is a binding site for L-serine. 356–359 contributes to the ATP binding site; sequence EVSS. Position 392 (Ser392) interacts with L-serine.

This sequence belongs to the class-II aminoacyl-tRNA synthetase family. Type-1 seryl-tRNA synthetase subfamily. As to quaternary structure, homodimer. The tRNA molecule binds across the dimer.

It is found in the cytoplasm. It catalyses the reaction tRNA(Ser) + L-serine + ATP = L-seryl-tRNA(Ser) + AMP + diphosphate + H(+). It carries out the reaction tRNA(Sec) + L-serine + ATP = L-seryl-tRNA(Sec) + AMP + diphosphate + H(+). It participates in aminoacyl-tRNA biosynthesis; selenocysteinyl-tRNA(Sec) biosynthesis; L-seryl-tRNA(Sec) from L-serine and tRNA(Sec): step 1/1. In terms of biological role, catalyzes the attachment of serine to tRNA(Ser). Is also able to aminoacylate tRNA(Sec) with serine, to form the misacylated tRNA L-seryl-tRNA(Sec), which will be further converted into selenocysteinyl-tRNA(Sec). This chain is Serine--tRNA ligase, found in Buchnera aphidicola subsp. Baizongia pistaciae (strain Bp).